The following is a 406-amino-acid chain: Argininosuccinate synthase (406 aa).

Residues 13 to 21 and Ala-40 contribute to the ATP site; that span reads AYSGGLDTS. L-citrulline is bound by residues Tyr-91 and Ser-96. Position 121 (Gly-121) interacts with ATP. Positions 123, 127, and 128 each coordinate L-aspartate. Asn-127 is an L-citrulline binding site. L-citrulline is bound by residues Arg-131, Ser-182, Ser-191, Glu-267, and Tyr-279.

Belongs to the argininosuccinate synthase family. Type 1 subfamily. In terms of assembly, homotetramer.

The protein resides in the cytoplasm. It carries out the reaction L-citrulline + L-aspartate + ATP = 2-(N(omega)-L-arginino)succinate + AMP + diphosphate + H(+). Its pathway is amino-acid biosynthesis; L-arginine biosynthesis; L-arginine from L-ornithine and carbamoyl phosphate: step 2/3. The chain is Argininosuccinate synthase from Brucella abortus (strain S19).